The primary structure comprises 368 residues: Glycoprotein UL18 (368 aa).

An N-terminal signal peptide occupies residues 1–18; that stretch reads MMTMWCLTLFVLWMLRVV. The tract at residues 19-114 is alpha-1-like; sequence GMHVLRYGYT…EIALGYRSQS (96 aa). Asparagine 56, asparagine 66, asparagine 74, asparagine 95, asparagine 123, asparagine 127, asparagine 150, asparagine 167, asparagine 177, asparagine 193, asparagine 240, asparagine 282, and asparagine 291 each carry an N-linked (GlcNAc...) asparagine; by host glycan. Residues 115–208 are alpha-2-like; sequence VLTWTHECNT…VIYSGFQPPV (94 aa). The segment at 209–303 is alpha-3-like; the sequence is THPVVKGGVR…VEIPISVTSP (95 aa). The chain crosses the membrane as a helical span at residues 321–342; it reads YNTMTISSVLLALLLCALLFAF.

In terms of assembly, interacts with host LILRB1.

It is found in the host membrane. Functionally, plays a role in the protection against host NK cell cytotoxicity by interacting with and modulating the activity of the host inhibitory leukocyte Ig-like receptor 1/LILRB1, which is expressed on monocytes, dendritic cells, as well as subsets of T and NK cells. UL18 exerts an inhibitory effect on LIR-1+ NK cells, while it stimulates LIR-1- NK cell. These modulations prevent lysis of the infected cells by NK cells. This Homo sapiens (Human) protein is Glycoprotein UL18 (H301).